The following is a 274-amino-acid chain: Protein RecA (274 aa).

ATP is bound at residue 43–50; sequence GPESSGKT.

The protein belongs to the RecA family.

Its subcellular location is the cytoplasm. Functionally, can catalyze the hydrolysis of ATP in the presence of single-stranded DNA, the ATP-dependent uptake of single-stranded DNA by duplex DNA, and the ATP-dependent hybridization of homologous single-stranded DNAs. It interacts with LexA causing its activation and leading to its autocatalytic cleavage. The sequence is that of Protein RecA from Neisseria mucosa.